The primary structure comprises 118 residues: Thioredoxin-like protein CXXS1 (118 aa).

Positions 2-110 (ARVVKIDSAE…IKKRVDGFVQ (109 aa)) constitute a Thioredoxin domain.

This sequence belongs to the thioredoxin family. Ubiquitous.

The protein resides in the cytoplasm. Functionally, possesses low disulfide reductase activity, but efficient protein disulfide isomerase activity. Does not possess deglutathionylation activity. The protein is Thioredoxin-like protein CXXS1 (CXXS1) of Arabidopsis thaliana (Mouse-ear cress).